The following is a 475-amino-acid chain: Ribulose bisphosphate carboxylase large chain (475 aa).

The propeptide occupies 1–2 (MS). Pro3 is modified (N-acetylproline). Lys14 carries the N6,N6,N6-trimethyllysine modification. Positions 123 and 173 each coordinate substrate. The Proton acceptor role is filled by Lys175. Position 177 (Lys177) interacts with substrate. Residues Lys201, Asp203, and Glu204 each coordinate Mg(2+). An N6-carboxylysine modification is found at Lys201. Residue His294 is the Proton acceptor of the active site. 3 residues coordinate substrate: Arg295, His327, and Ser379.

This sequence belongs to the RuBisCO large chain family. Type I subfamily. As to quaternary structure, heterohexadecamer of 8 large chains and 8 small chains; disulfide-linked. The disulfide link is formed within the large subunit homodimers. Mg(2+) serves as cofactor. Post-translationally, the disulfide bond which can form in the large chain dimeric partners within the hexadecamer appears to be associated with oxidative stress and protein turnover.

Its subcellular location is the plastid. The protein localises to the chloroplast. The enzyme catalyses 2 (2R)-3-phosphoglycerate + 2 H(+) = D-ribulose 1,5-bisphosphate + CO2 + H2O. It carries out the reaction D-ribulose 1,5-bisphosphate + O2 = 2-phosphoglycolate + (2R)-3-phosphoglycerate + 2 H(+). Functionally, ruBisCO catalyzes two reactions: the carboxylation of D-ribulose 1,5-bisphosphate, the primary event in carbon dioxide fixation, as well as the oxidative fragmentation of the pentose substrate in the photorespiration process. Both reactions occur simultaneously and in competition at the same active site. The sequence is that of Ribulose bisphosphate carboxylase large chain from Cryptomeria japonica (Japanese cedar).